The sequence spans 367 residues: Cell-death-related nuclease 7 (367 aa).

The N-terminal stretch at 1 to 18 (MRLYFVLIFSVIFTTGNG) is a signal peptide. The N-linked (GlcNAc...) asparagine glycan is linked to Asn-253.

The protein belongs to the DNase II family.

The chain is Cell-death-related nuclease 7 (crn-7) from Caenorhabditis elegans.